The following is a 335-amino-acid chain: Beta-ketoacyl-[acyl-carrier-protein] synthase III 2 (335 aa).

Catalysis depends on residues cysteine 116 and histidine 256. The segment at 257–261 is ACP-binding; the sequence is QANVR. Asparagine 286 is a catalytic residue.

This sequence belongs to the thiolase-like superfamily. FabH family. In terms of assembly, homodimer.

The protein localises to the cytoplasm. The enzyme catalyses malonyl-[ACP] + acetyl-CoA + H(+) = 3-oxobutanoyl-[ACP] + CO2 + CoA. It participates in lipid metabolism; fatty acid biosynthesis. Functionally, catalyzes the condensation reaction of fatty acid synthesis by the addition to an acyl acceptor of two carbons from malonyl-ACP. Catalyzes the first condensation reaction which initiates fatty acid synthesis and may therefore play a role in governing the total rate of fatty acid production. Possesses both acetoacetyl-ACP synthase and acetyl transacylase activities. Its substrate specificity determines the biosynthesis of branched-chain and/or straight-chain of fatty acids. The sequence is that of Beta-ketoacyl-[acyl-carrier-protein] synthase III 2 from Bacteroides thetaiotaomicron (strain ATCC 29148 / DSM 2079 / JCM 5827 / CCUG 10774 / NCTC 10582 / VPI-5482 / E50).